Consider the following 429-residue polypeptide: Glutamate-1-semialdehyde 2,1-aminomutase (429 aa).

Lys265 carries the N6-(pyridoxal phosphate)lysine modification.

This sequence belongs to the class-III pyridoxal-phosphate-dependent aminotransferase family. HemL subfamily. Homodimer. It depends on pyridoxal 5'-phosphate as a cofactor.

Its subcellular location is the cytoplasm. It carries out the reaction (S)-4-amino-5-oxopentanoate = 5-aminolevulinate. It participates in porphyrin-containing compound metabolism; protoporphyrin-IX biosynthesis; 5-aminolevulinate from L-glutamyl-tRNA(Glu): step 2/2. This chain is Glutamate-1-semialdehyde 2,1-aminomutase, found in Shewanella pealeana (strain ATCC 700345 / ANG-SQ1).